The primary structure comprises 29 residues: Glucagon (29 aa).

Phosphoserine is present on serine 2.

The protein belongs to the glucagon family.

It localises to the secreted. Glucagon plays a key role in glucose metabolism and homeostasis. Regulates blood glucose by increasing gluconeogenesis and decreasing glycolysis. The chain is Glucagon (GCG) from Oryctolagus cuniculus (Rabbit).